Reading from the N-terminus, the 468-residue chain is 3-isopropylmalate dehydratase large subunit (468 aa).

[4Fe-4S] cluster is bound by residues Cys-347, Cys-407, and Cys-410.

This sequence belongs to the aconitase/IPM isomerase family. LeuC type 1 subfamily. In terms of assembly, heterodimer of LeuC and LeuD. It depends on [4Fe-4S] cluster as a cofactor.

The catalysed reaction is (2R,3S)-3-isopropylmalate = (2S)-2-isopropylmalate. It participates in amino-acid biosynthesis; L-leucine biosynthesis; L-leucine from 3-methyl-2-oxobutanoate: step 2/4. Functionally, catalyzes the isomerization between 2-isopropylmalate and 3-isopropylmalate, via the formation of 2-isopropylmaleate. This is 3-isopropylmalate dehydratase large subunit from Campylobacter jejuni (strain RM1221).